Consider the following 545-residue polypeptide: MAAKDVKFGNDARVKMLRGVNVLADAVKVTLGPKGRNVVLDKSFGAPVITKDGVSVAREIELEDKFENMGAQMVKEVASKANDAAGDGTTTATVLAQSIVNEGLKAVAAGMNPMDLKRGIDKAVIAAVEELKKLSVPCSDSKAIAQVGTISANADETVGTLIAEAMAKVGKEGVITVEEGSGLQDELDVVEGMQFDRGYLSPYFVNKPETGAVELESPFILLADKKISNIREMLPVLEAVAKAGKPLLIIAEDVEGEALATLVVNTMRGIVKIAAVKAPGFGDRRKAMLRDIAILTAGTVISEEIGLELEKATLEDMGQAKRVVITKDTTTIIDGEGDKALIDSRVTQINQQRDEATSDYDREKLQERVAKLAGGVAVIKVGAATEVEMKEKKARVEDALHATRAAVEEGVVAGGGVALIRVANRIAELRGDNEDQNVGIKVARRAMEAPLRQIVANAGEEPSVIANKVKAGEGNTGYNAATEEYGNMIDMGILDPTKVTRSALQYAASIAGLMITTECMVTDLPKEDKPDLGGAGGMGGMGGMM.

Residues 30 to 33 (TLGP), K51, 87 to 91 (DGTTT), G415, 479 to 481 (NAA), and D495 contribute to the ATP site. The tract at residues 526 to 545 (KEDKPDLGGAGGMGGMGGMM) is disordered. Residues 533–545 (GGAGGMGGMGGMM) are compositionally biased toward gly residues.

This sequence belongs to the chaperonin (HSP60) family. As to quaternary structure, forms a cylinder of 14 subunits composed of two heptameric rings stacked back-to-back. Interacts with the co-chaperonin GroES.

Its subcellular location is the cytoplasm. The enzyme catalyses ATP + H2O + a folded polypeptide = ADP + phosphate + an unfolded polypeptide.. Functionally, together with its co-chaperonin GroES, plays an essential role in assisting protein folding. The GroEL-GroES system forms a nano-cage that allows encapsulation of the non-native substrate proteins and provides a physical environment optimized to promote and accelerate protein folding. This Sodalis glossinidius protein is Chaperonin GroEL.